We begin with the raw amino-acid sequence, 295 residues long: Cytidine deaminase (295 aa).

CMP/dCMP-type deaminase domains follow at residues 48 to 168 (EDAD…FGPA) and 187 to 295 (DDDE…YLSL). 89–91 (NME) contributes to the substrate binding site. Residue His-102 participates in Zn(2+) binding. Glu-104 (proton donor) is an active-site residue. Cys-129 and Cys-132 together coordinate Zn(2+).

This sequence belongs to the cytidine and deoxycytidylate deaminase family. As to quaternary structure, homodimer. Zn(2+) is required as a cofactor.

It carries out the reaction cytidine + H2O + H(+) = uridine + NH4(+). The enzyme catalyses 2'-deoxycytidine + H2O + H(+) = 2'-deoxyuridine + NH4(+). In terms of biological role, this enzyme scavenges exogenous and endogenous cytidine and 2'-deoxycytidine for UMP synthesis. This chain is Cytidine deaminase, found in Vibrio cholerae serotype O1 (strain ATCC 39315 / El Tor Inaba N16961).